Here is a 440-residue protein sequence, read N- to C-terminus: Enolase (440 aa).

Position 163 (glutamine 163) interacts with (2R)-2-phosphoglycerate. The active-site Proton donor is glutamate 205. 3 residues coordinate Mg(2+): aspartate 242, glutamate 288, and aspartate 315. (2R)-2-phosphoglycerate-binding residues include lysine 340, arginine 369, serine 370, and lysine 391. Residue lysine 340 is the Proton acceptor of the active site.

It belongs to the enolase family. Mg(2+) serves as cofactor.

Its subcellular location is the cytoplasm. The protein localises to the secreted. It is found in the cell surface. It catalyses the reaction (2R)-2-phosphoglycerate = phosphoenolpyruvate + H2O. The protein operates within carbohydrate degradation; glycolysis; pyruvate from D-glyceraldehyde 3-phosphate: step 4/5. Catalyzes the reversible conversion of 2-phosphoglycerate (2-PG) into phosphoenolpyruvate (PEP). It is essential for the degradation of carbohydrates via glycolysis. The protein is Enolase of Limosilactobacillus fermentum (strain NBRC 3956 / LMG 18251) (Lactobacillus fermentum).